The primary structure comprises 122 residues: uncharacterized protein (122 aa).

Helical transmembrane passes span 14–34 (WLWI…FNNV) and 83–103 (IIGV…YFII).

Its subcellular location is the cell membrane. This is an uncharacterized protein from Ureaplasma parvum serovar 3 (strain ATCC 700970).